A 380-amino-acid chain; its full sequence is tRNA pseudouridine synthase B (380 aa).

Residue Asp63 is the Nucleophile of the active site. The interval 309-339 (QNVEDDNDDNDDNDDNDDNDDNDDNDDNDDN) is disordered. Residues 311–338 (VEDDNDDNDDNDDNDDNDDNDDNDDNDD) are compositionally biased toward acidic residues.

It belongs to the pseudouridine synthase TruB family. Type 1 subfamily.

The catalysed reaction is uridine(55) in tRNA = pseudouridine(55) in tRNA. Functionally, responsible for synthesis of pseudouridine from uracil-55 in the psi GC loop of transfer RNAs. The chain is tRNA pseudouridine synthase B from Psychrobacter arcticus (strain DSM 17307 / VKM B-2377 / 273-4).